The primary structure comprises 287 residues: Cyclopropane mycolic acid synthase 1 (287 aa).

Residues 33-34 (YS), 68-76 (LLDVGCGWG), 94-99 (TLSKNQ), and 123-124 (WE) each bind S-adenosyl-L-methionine. The active site involves C269.

The protein belongs to the CFA/CMAS family. In terms of assembly, homodimer.

It is found in the cytoplasm. The enzyme catalyses a 1-acyl-2-(9Z)-enoyl-sn-glycero-3-phospholipid + S-adenosyl-L-methionine = a 1-acyl-2-(9-cyclopronane)-acyl-sn-glycero-3-phospholipid + S-adenosyl-L-homocysteine + H(+). The protein operates within lipid metabolism; mycolic acid biosynthesis. Functionally, catalyzes the conversion of a double bond to a cyclopropane ring at the distal position of an alpha mycolic acid via the transfer of a methylene group from S-adenosyl-L-methionine. Cyclopropanated mycolic acids are key factors participating in cell envelope permeability, host immunomodulation and persistence. This is Cyclopropane mycolic acid synthase 1 (cmaA1) from Mycobacterium tuberculosis (strain CDC 1551 / Oshkosh).